A 248-amino-acid polypeptide reads, in one-letter code: Carbohydrate deacetylase 2 (248 aa).

Mg(2+) is bound by residues histidine 59 and histidine 123.

The protein belongs to the YdjC deacetylase family. In terms of assembly, homodimer. Requires Mg(2+) as cofactor.

Functionally, probably catalyzes the deacetylation of acetylated carbohydrates an important step in the degradation of oligosaccharides. The polypeptide is Carbohydrate deacetylase 2 (Listeria innocua serovar 6a (strain ATCC BAA-680 / CLIP 11262)).